Here is a 134-residue protein sequence, read N- to C-terminus: Cystatin-1 (134 aa).

A signal peptide spans 1-17 (MKAIYLILTVLCGFSAS). Positions 21 to 116 (GGWRDKDVDD…CTAIIWTRSW (96 aa)) constitute a Cystatin domain. Positions 65-69 (QVVSG) match the Secondary area of contact motif. Intrachain disulfides connect Cys83–Cys96 and Cys107–Cys127.

This sequence belongs to the cystatin family. In terms of tissue distribution, expressed by the venom gland.

It is found in the secreted. Its function is as follows. Inhibits various C1 cysteine proteases. This protein has no toxic activity and its function in the venom is unknown. It may play a role as a housekeeping or regulatory protein. The protein is Cystatin-1 of Chilobrachys guangxiensis (Chinese earth tiger tarantula).